Reading from the N-terminus, the 312-residue chain is Ribosomal RNA small subunit methyltransferase H (312 aa).

S-adenosyl-L-methionine contacts are provided by residues 35 to 37, aspartate 55, phenylalanine 79, aspartate 100, and glutamine 107; that span reads GGH.

It belongs to the methyltransferase superfamily. RsmH family.

Its subcellular location is the cytoplasm. It catalyses the reaction cytidine(1402) in 16S rRNA + S-adenosyl-L-methionine = N(4)-methylcytidine(1402) in 16S rRNA + S-adenosyl-L-homocysteine + H(+). Specifically methylates the N4 position of cytidine in position 1402 (C1402) of 16S rRNA. This chain is Ribosomal RNA small subunit methyltransferase H, found in Azoarcus sp. (strain BH72).